The following is a 512-amino-acid chain: Solute carrier family 2, facilitated glucose transporter member 7 (512 aa).

Over 1 to 21 (MENKEAGTPPPIPSREGRLQP) the chain is Cytoplasmic. A helical transmembrane segment spans residues 22-42 (TLLLATLSAAFGSAFQYGYNL). Over 43-78 (SVVNTPHKVFKSFYNETYFERHATFMDGKLMLLLWS) the chain is Extracellular. An N-linked (GlcNAc...) asparagine glycan is attached at N57. Residues 79–99 (CTVSMFPLGGLLGSLLVGLLV) form a helical membrane-spanning segment. Residues 100-107 (DSCGRKGT) are Cytoplasmic-facing. The chain crosses the membrane as a helical span at residues 108–128 (LLINNIFAIIPAILMGVSKVA). Residues 129 to 138 (KAFELIVFSR) are Extracellular-facing. A helical membrane pass occupies residues 139–159 (VVLGVCAGISYSALPMYLGEL). Over 160–172 (APKNLRGMVGTMT) the chain is Cytoplasmic. A helical membrane pass occupies residues 173–193 (EVFVIVGVFLAQIFSLQAILG). Residues 194 to 198 (NPAGW) lie on the Extracellular side of the membrane. Residues 199-219 (PVLLALTGVPALLQLLTLPFF) traverse the membrane as a helical segment. The Cytoplasmic portion of the chain corresponds to 220-281 (PESPRYSLIQ…LHLCALRSLR (62 aa)). Residues 282 to 302 (WQLLSIIVLMAGQQLSGINAI) traverse the membrane as a helical segment. D-glucose is bound by residues 294–295 (QQ) and N300. The Extracellular segment spans residues 303–321 (NYYADTIYTSAGVEAAHSQ). Residues 322–342 (YVTVGSGVVNIVMTITSAVLV) form a helical membrane-spanning segment. D-glucose is bound at residue N331. Over 343 to 350 (ERLGRRHL) the chain is Cytoplasmic. The helical transmembrane segment at 351–371 (LLAGYGICGSACLVLTVVLLF) threads the bilayer. The Extracellular segment spans residues 372–379 (QNRVPELS). Residues 380-400 (YLGIICVFAYIAGHSIGPSPV) form a helical membrane-spanning segment. The Cytoplasmic segment spans residues 401 to 415 (PSVVRTEIFLQSSRR). Residues 416–436 (AAFMVDGAVHWLTNFIIGFLF) form a helical membrane-spanning segment. Residues 437 to 445 (PSIQEAIGA) lie on the Extracellular side of the membrane. The chain crosses the membrane as a helical span at residues 446 to 466 (YSFIIFAGICLLTAIYIYVVI). Over 467 to 512 (PETKGKTFVEINRIFAKRNRVKLPEEKEETIDAGPPTASPAKETSF) the chain is Cytoplasmic. The disordered stretch occupies residues 491 to 512 (EEKEETIDAGPPTASPAKETSF).

Belongs to the major facilitator superfamily. Sugar transporter (TC 2.A.1.1) family. Glucose transporter subfamily. As to expression, expressed in small intestine and colon. Weakly expressed in testis and prostate.

It localises to the cell membrane. It is found in the apical cell membrane. It carries out the reaction D-glucose(out) = D-glucose(in). The enzyme catalyses D-fructose(out) = D-fructose(in). With respect to regulation, glucose and fructose transport are inhibited by the flavonoid apigenin. Its function is as follows. Probable sugar transporter. Even if its physiological substrate is subject to discussion, it is able to transport glucose and fructose. Does not transport galactose, 2-deoxy-d-glucose and xylose. This chain is Solute carrier family 2, facilitated glucose transporter member 7, found in Homo sapiens (Human).